A 479-amino-acid polypeptide reads, in one-letter code: MFS-type transporter lnaF (479 aa).

11 helical membrane passes run Trp47–Pro67, Gly71–Ile91, Leu104–Ile124, Trp136–Leu156, Leu177–Gly197, Ile208–Trp228, Ile250–Phe270, Leu283–Val303, Ile306–Leu326, Ile344–Val364, and Leu372–Ala392. Asn416 carries N-linked (GlcNAc...) asparagine glycosylation. Residues Leu442 to Ala462 form a helical membrane-spanning segment.

This sequence belongs to the major facilitator superfamily. TCR/Tet family.

It localises to the cell membrane. In terms of biological role, MFS-type transporter; part of the lnb gene cluster that mediates the biosynthesis of diastereomeric piperazines. Lna and lnb clusters encode sets of enzymes that produce overlapping sets of previously undescribed metabolites such as piperazinomycin-like metabolites or morpholine. The lna and lnb biosynthetic pathways appear to be part of a signaling network that controls the formation of sclerotia, a resilient overwintering structure. May be involved in the secretion of the metabolites produced by the lna and lnb clusters. The protein is MFS-type transporter lnaF of Aspergillus flavus (strain ATCC 200026 / FGSC A1120 / IAM 13836 / NRRL 3357 / JCM 12722 / SRRC 167).